The following is a 329-amino-acid chain: 36 kDa antigen (329 aa).

A helical transmembrane segment spans residues 11–31 (AILTGGGALLLGLIVLFYLAY).

The protein belongs to the membrane fusion protein (MFP) (TC 8.A.1) family.

Its subcellular location is the membrane. This is 36 kDa antigen from Helicobacter pylori (strain ATCC 700392 / 26695) (Campylobacter pylori).